The chain runs to 280 residues: MINNLKTFILLASLTALLVVIGGLLGGSTGMLVALLFAGIMNFSAYWYSDTLVLKMYNAEPLSNNHFVYHIVSELAHRAGTSVPKVYLINNSTPNAFATGRNPENASIAVTTGLLDRLTQEEITGVLAHELAHVIHRDTLINVVSATIAGAISGIANMFMWLSMFGHNSNNQEGVHPVVGMIMMIVAPLAAGLIQMAISRSREFEADAGGAQISGNPQWLASALLKLDQANHEQYFDEAETHPATAHLFIINPLNGEKLANLFSTHPSTAERVARLRAMY.

A run of 2 helical transmembrane segments spans residues T7–G26 and G30–S49. H129 provides a ligand contact to Zn(2+). E130 is a catalytic residue. H133 lines the Zn(2+) pocket. Helical transmembrane passes span A146 to G166 and V178 to I198. Residue E203 coordinates Zn(2+).

This sequence belongs to the peptidase M48B family. It depends on Zn(2+) as a cofactor.

The protein resides in the cell inner membrane. This is Protease HtpX from Legionella pneumophila (strain Lens).